A 145-amino-acid chain; its full sequence is Cell wall synthesis protein CwsA (145 aa).

A helical membrane pass occupies residues 104-124 (WIFAGIAAAILAGGAVAFSIV).

This sequence belongs to the CwsA family. Interacts with CrgA and Wag31.

It localises to the cell membrane. Required for regulated cell division, cell wall synthesis and the maintenance of cell shape. In Mycobacterium tuberculosis (strain ATCC 25618 / H37Rv), this protein is Cell wall synthesis protein CwsA.